The primary structure comprises 332 residues: Delta-aminolevulinic acid dehydratase (332 aa).

K202 (schiff-base intermediate with substrate) is an active-site residue. The 5-aminolevulinate site is built by R212 and K225. K256 acts as the Schiff-base intermediate with substrate in catalysis. 5-aminolevulinate is bound by residues S282 and Y321.

The protein belongs to the ALAD family. As to quaternary structure, homohexamer.

It carries out the reaction 2 5-aminolevulinate = porphobilinogen + 2 H2O + H(+). It functions in the pathway porphyrin-containing compound metabolism; protoporphyrin-IX biosynthesis; coproporphyrinogen-III from 5-aminolevulinate: step 1/4. Its function is as follows. Catalyzes an early step in the biosynthesis of tetrapyrroles. Binds two molecules of 5-aminolevulinate per subunit, each at a distinct site, and catalyzes their condensation to form porphobilinogen. The sequence is that of Delta-aminolevulinic acid dehydratase (hemB) from Rhodobacter capsulatus (Rhodopseudomonas capsulata).